Consider the following 308-residue polypeptide: Acetyl-coenzyme A carboxylase carboxyl transferase subunit beta (308 aa).

A CoA carboxyltransferase N-terminal domain is found at 46–308 (LWVKCPDTGE…LMMGRGLKAA (263 aa)).

Belongs to the AccD/PCCB family. In terms of assembly, acetyl-CoA carboxylase is a heterohexamer composed of biotin carboxyl carrier protein (AccB), biotin carboxylase (AccC) and two subunits each of ACCase subunit alpha (AccA) and ACCase subunit beta (AccD).

The protein localises to the cytoplasm. The catalysed reaction is N(6)-carboxybiotinyl-L-lysyl-[protein] + acetyl-CoA = N(6)-biotinyl-L-lysyl-[protein] + malonyl-CoA. It participates in lipid metabolism; malonyl-CoA biosynthesis; malonyl-CoA from acetyl-CoA: step 1/1. Functionally, component of the acetyl coenzyme A carboxylase (ACC) complex. Biotin carboxylase (BC) catalyzes the carboxylation of biotin on its carrier protein (BCCP) and then the CO(2) group is transferred by the transcarboxylase to acetyl-CoA to form malonyl-CoA. The protein is Acetyl-coenzyme A carboxylase carboxyl transferase subunit beta of Caulobacter sp. (strain K31).